Reading from the N-terminus, the 149-residue chain is uncharacterized protein (149 aa).

The 149-residue stretch at methionine 1–lysine 149 folds into the N-acetyltransferase domain.

The protein belongs to the acetyltransferase family.

This is an uncharacterized protein from Bacillus subtilis (strain 168).